A 248-amino-acid chain; its full sequence is Putative homeobox-leucine zipper protein HOX26 (248 aa).

A disordered region spans residues 50-118 (KKVAAAAVVA…GDEEGASRKK (69 aa)). The span at 79-89 (RQRRSCKKGRR) shows a compositional bias: basic residues. Positions 114–173 (ASRKKLRLTGEQATLLEDSFRAHNILSHAEKQELAGKLGLSARQVEVWFQNRRARTKLKQ) form a DNA-binding region, homeobox. Residues 172 to 216 (KQTEADCDLLRRWCDHLAADNARLRRDLAELRRSSSSPPVSGLAV) form a leucine-zipper region.

It belongs to the HD-ZIP homeobox family. Class II subfamily.

It is found in the nucleus. Its function is as follows. Probable transcription factor. The chain is Putative homeobox-leucine zipper protein HOX26 (HOX26) from Oryza sativa subsp. japonica (Rice).